A 176-amino-acid polypeptide reads, in one-letter code: ATP-dependent protease subunit HslV (176 aa).

The active site involves T2. Residues G157, C160, and T163 each contribute to the Na(+) site.

It belongs to the peptidase T1B family. HslV subfamily. As to quaternary structure, a double ring-shaped homohexamer of HslV is capped on each side by a ring-shaped HslU homohexamer. The assembly of the HslU/HslV complex is dependent on binding of ATP.

Its subcellular location is the cytoplasm. The catalysed reaction is ATP-dependent cleavage of peptide bonds with broad specificity.. Its activity is regulated as follows. Allosterically activated by HslU binding. In terms of biological role, protease subunit of a proteasome-like degradation complex believed to be a general protein degrading machinery. This is ATP-dependent protease subunit HslV from Salmonella agona (strain SL483).